Consider the following 1194-residue polypeptide: DNA polymerase catalytic subunit (1194 aa).

The protein belongs to the DNA polymerase type-B family. Forms a complex with the ssDNA-binding protein, the DNA polymerase processivity factor, and the alkaline exonuclease. Interacts with the helicase-primase complex composed of the primase, the helicase and the primase-associated factor; this interaction may coordinate leading and lagging strand DNA synthesis at the replication fork.

Its subcellular location is the host nucleus. It catalyses the reaction DNA(n) + a 2'-deoxyribonucleoside 5'-triphosphate = DNA(n+1) + diphosphate. The enzyme catalyses Endonucleolytic cleavage to 5'-phosphomonoester.. In terms of biological role, replicates viral genomic DNA. The replication complex is composed of six viral proteins: the DNA polymerase, processivity factor, primase, primase-associated factor, helicase, and ssDNA-binding protein. Additionally, the polymerase contains an intrinsic ribonuclease H (RNase H) activity that specifically degrades RNA/DNA heteroduplexes or duplex DNA substrates in the 5' to 3' direction. Therefore, it can catalyze the excision of the RNA primers that initiate the synthesis of Okazaki fragments at a replication fork during viral DNA replication. This is DNA polymerase catalytic subunit from Varicella-zoster virus (strain Dumas) (HHV-3).